The primary structure comprises 659 residues: A-type ATP synthase subunit I (659 aa).

The next 8 helical transmembrane spans lie at 376–396 (FFFG…IISA), 415–435 (IMLW…SYCG), 460–480 (MIAL…GFIV), 489–509 (GAIF…LFAL), 518–538 (LIVK…EVLA), 542–562 (MAVL…LSYA), 568–588 (ALAT…IWGI), and 590–610 (IASV…GHIF).

The protein belongs to the V-ATPase 116 kDa subunit family. In terms of assembly, has multiple subunits with at least A(3), B(3), C, D, E, F, H, I and proteolipid K(x).

The protein resides in the cell membrane. In terms of biological role, component of the A-type ATP synthase that produces ATP from ADP in the presence of a proton gradient across the membrane. In Pyrococcus horikoshii (strain ATCC 700860 / DSM 12428 / JCM 9974 / NBRC 100139 / OT-3), this protein is A-type ATP synthase subunit I.